The chain runs to 668 residues: MAANMYRVGDYVYFENSSSNPYLVRRIEELNKTANGNVEAKVVCLFRRRDISSSLNSLADSNAREFEEESKQPGVSEQQRHQLKHRELFLSRQFESLPATHIRGKCSVTLLNETDILSQYLEKEDCFFYSLVFDPVQKTLLADQGEIRVGCKYQAEIPDRLVEGESDNRNQQKMEMKVWDPDNPLTDRQIDQFLVVARAVGTFARALDCSSSIRQPSLHMSAAAASRDITLFHAMDTLQRNGYDLAKAMSTLVPQGGPVLCRDEMEEWSASEAMLFEEALEKYGKDFNDIRQDFLPWKSLASIVQFYYMWKTTDRYIQQKRLKAAEADSKLKQVYIPTYTKPNPNQIISVGSKPGMNGAGFQKGLTCESCHTTQSAQWYAWGPPNMQCRLCASCWIYWKKYGGLKTPTQLEGATRGTTEPHSRGHLSRPEAQSLSPYTTSANRAKLLAKNRQTFLLQTTKLTRLARRMCRDLLQPRRAARRPYAPINANAIKAECSIRLPKAAKTPLKIHPLVRLPLATIVKDLVAQAPLKPKTPRGTKTPINRNQLSQNRGLGGIMVKRAYETMAGAGVPFSANGRPLASGIRSSSQPAAKRQKLNPADAPNPVVFVATKDTRALRKALTHLEMRRAARRPNLPLKVKPTLIAVRPPVPLPAPSHPASTNEPIVLED.

Positions 1–144 (MAANMYRVGD…PVQKTLLADQ (144 aa)) constitute a BAH domain. Residues serine 52 and serine 54 each carry the phosphoserine modification. In terms of domain architecture, ELM2 spans 145–256 (GEIRVGCKYQ…KAMSTLVPQG (112 aa)). Lysine 152 is modified (N6-acetyllysine). The region spanning 263–315 (DEMEEWSASEAMLFEEALEKYGKDFNDIRQDFLPWKSLASIVQFYYMWKTTDR) is the SANT domain. A GATA-type; atypical zinc finger spans residues 367 to 394 (CESCHTTQSAQWYAWGPPNMQCRLCASC). Polar residues predominate over residues 409–419 (QLEGATRGTTE). Positions 409-437 (QLEGATRGTTEPHSRGHLSRPEAQSLSPY) are disordered. A phosphoserine mark is found at serine 433 and serine 435. Lysine 460 bears the N6-acetyllysine mark. A Glycyl lysine isopeptide (Lys-Gly) (interchain with G-Cter in SUMO2 and SUMO3); alternate cross-link involves residue lysine 492. Lysine 492 participates in a covalent cross-link: Glycyl lysine isopeptide (Lys-Gly) (interchain with G-Cter in SUMO2); alternate. Lysine 508 is covalently cross-linked (Glycyl lysine isopeptide (Lys-Gly) (interchain with G-Cter in SUMO2)). An N6-acetyllysine mark is found at lysine 522 and lysine 531. The residue at position 534 (threonine 534) is a Phosphothreonine. Phosphoserine is present on serine 548. Glycyl lysine isopeptide (Lys-Gly) (interchain with G-Cter in SUMO2) cross-links involve residues lysine 559 and lysine 595. Disordered regions lie at residues 580 to 599 (ASGI…LNPA) and 647 to 668 (PPVP…VLED).

This sequence belongs to the metastasis-associated protein family. In terms of assembly, component of the nucleosome remodeling and deacetylase (NuRD) repressor complex, composed of core proteins MTA1, MTA2, MTA3, RBBP4, RBBP7, HDAC1, HDAC2, MBD2, MBD3, and peripherally associated proteins CDK2AP1, CDK2AP2, GATAD2A, GATAD2B, CHD3, CHD4 and CHD5. The exact stoichiometry of the NuRD complex is unknown, and some subunits such as MBD2 and MBD3, GATAD2A and GATAD2B, and CHD3, CHD4 and CHD5 define mutually exclusive NuRD complexes. Interacts with CHD3. Interacts with CHD4. Interacts with GATAD2A. Interacts with HDAC7. Interacts with MBD3. Interacts with p53/TP53. Interacts with MINT. Interacts with PIMREG. Interacts with NACC2. Interacts with ERCC6. Interacts with PWWP2B. Interacts with transcription factor BCL11A. In terms of tissue distribution, widely expressed.

It localises to the nucleus. Its function is as follows. May function as a transcriptional coregulator. Acts as a component of the histone deacetylase NuRD complex which participates in the remodeling of chromatin. The chain is Metastasis-associated protein MTA2 (MTA2) from Homo sapiens (Human).